We begin with the raw amino-acid sequence, 615 residues long: Glutamine--fructose-6-phosphate aminotransferase [isomerizing] (615 aa).

The Nucleophile; for GATase activity role is filled by Cys-2. The Glutamine amidotransferase type-2 domain maps to 2–220 (CGIVGYVGPQ…QDQVVELRRD (219 aa)). 2 SIS domains span residues 287 to 427 (IPPG…VRGT) and 460 to 605 (LARS…VDQP). Lys-610 serves as the catalytic For Fru-6P isomerization activity.

Homodimer.

It localises to the cytoplasm. The enzyme catalyses D-fructose 6-phosphate + L-glutamine = D-glucosamine 6-phosphate + L-glutamate. Its function is as follows. Catalyzes the first step in hexosamine metabolism, converting fructose-6P into glucosamine-6P using glutamine as a nitrogen source. In Streptomyces coelicolor (strain ATCC BAA-471 / A3(2) / M145), this protein is Glutamine--fructose-6-phosphate aminotransferase [isomerizing].